Reading from the N-terminus, the 589-residue chain is Phenylalanine--tRNA ligase beta subunit (589 aa).

Residues 302 to 379 (LAYRKEMVRA…IAYGYNNIQM (78 aa)) form the B5 domain. Residues Asp357, Asp363, Glu366, and Asp367 each contribute to the Mg(2+) site.

This sequence belongs to the phenylalanyl-tRNA synthetase beta subunit family. Type 2 subfamily. Heterotetramer; dimer of two heterodimers formed by FARSA and FARSB. The cofactor is Mg(2+).

The protein localises to the cytoplasm. The enzyme catalyses tRNA(Phe) + L-phenylalanine + ATP = L-phenylalanyl-tRNA(Phe) + AMP + diphosphate + H(+). The sequence is that of Phenylalanine--tRNA ligase beta subunit (FARSB) from Homo sapiens (Human).